Consider the following 299-residue polypeptide: MDEAIRRFIEHLAVAGRSPHTLAAYRADIELLENMMQAKSARDATAAELRKALAKLHAQGLSSRSLARRLSSWRQFYHWLQRNGEREDNPAAGLYAPKRDKLLPKALPVDGTAALLDRIEGESELDARDRAIFELVYSCGLRLSETVALNLDDVDFSDSLLRIRGKGGKERLVPIGAEAMLRLRTWLGERSAGMDEPALFLGRHGHRLGGRQVEKRLRDWAIKTGAGQHVHPHMLRHSFASHMLQSSGDLRAVQELLGHANLSSTQIYTALDFQHLAKVYDGAHPRARKRGKPDDENKS.

The 81-residue stretch at 1–81 folds into the Core-binding (CB) domain; the sequence is MDEAIRRFIE…SWRQFYHWLQ (81 aa). One can recognise a Tyr recombinase domain in the interval 102–281; the sequence is LLPKALPVDG…DFQHLAKVYD (180 aa). Catalysis depends on residues Arg-142, Lys-166, His-233, Arg-236, and His-259. The active-site O-(3'-phospho-DNA)-tyrosine intermediate is the Tyr-268.

It belongs to the 'phage' integrase family. XerC subfamily. Forms a cyclic heterotetrameric complex composed of two molecules of XerC and two molecules of XerD.

It is found in the cytoplasm. Its function is as follows. Site-specific tyrosine recombinase, which acts by catalyzing the cutting and rejoining of the recombining DNA molecules. The XerC-XerD complex is essential to convert dimers of the bacterial chromosome into monomers to permit their segregation at cell division. It also contributes to the segregational stability of plasmids. This Chromobacterium violaceum (strain ATCC 12472 / DSM 30191 / JCM 1249 / CCUG 213 / NBRC 12614 / NCIMB 9131 / NCTC 9757 / MK) protein is Tyrosine recombinase XerC.